A 165-amino-acid polypeptide reads, in one-letter code: Cytochrome c-type biogenesis protein CcmE (165 aa).

At 1 to 7 (MTRKQKR) the chain is on the cytoplasmic side. Residues 8–28 (LAVIAGGMGFIIAAVLLVMFA) form a helical; Signal-anchor for type II membrane protein membrane-spanning segment. The Periplasmic portion of the chain corresponds to 29-165 (FSQSVAYFYM…GQGQEAKATR (137 aa)). The heme site is built by His124 and Tyr128. Low complexity predominate over residues 144–154 (QDGQGAQSQAG). Residues 144–165 (QDGQGAQSQAGQGQGQEAKATR) are disordered.

Belongs to the CcmE/CycJ family.

The protein resides in the cell inner membrane. Its function is as follows. Heme chaperone required for the biogenesis of c-type cytochromes. Transiently binds heme delivered by CcmC and transfers the heme to apo-cytochromes in a process facilitated by CcmF and CcmH. In Rhizobium etli (strain CIAT 652), this protein is Cytochrome c-type biogenesis protein CcmE.